Here is a 674-residue protein sequence, read N- to C-terminus: Probable L-type lectin-domain containing receptor kinase I.5 (674 aa).

An N-terminal signal peptide occupies residues 1-22; sequence MSKGLFLIWLISSFHLISFSTS. Over 23–286 the chain is Extracellular; the sequence is SKDTSFVFNG…RPRAEHKKVQ (264 aa). A legume-lectin like region spans residues 25–258; sequence DTSFVFNGFG…YHYLLGWSFS (234 aa). N-linked (GlcNAc...) asparagine glycosylation is found at Asn-124, Asn-181, Asn-185, Asn-204, and Asn-225. The helical transmembrane segment at 287–307 threads the bilayer; that stretch reads FALIIALPVILAIVVMAVLAG. Residues 308–674 are Cytoplasmic-facing; it reads VYYHRKKKYA…DHEQPLEFKS (367 aa). Residues 344 to 625 enclose the Protein kinase domain; that stretch reads FHKDRFLGRG…LPLPDFSPYT (282 aa). ATP-binding positions include 350 to 358 and Lys-372; that span reads LGRGGFGEV. The Proton acceptor role is filled by Asp-468. The segment covering 649–662 has biased composition (low complexity); sequence NWSAPSASSSSANN. The disordered stretch occupies residues 649–674; sequence NWSAPSASSSSANNSKDHEQPLEFKS. Positions 663–674 are enriched in basic and acidic residues; it reads SKDHEQPLEFKS.

This sequence in the C-terminal section; belongs to the protein kinase superfamily. Ser/Thr protein kinase family. It in the N-terminal section; belongs to the leguminous lectin family.

It localises to the cell membrane. It catalyses the reaction L-seryl-[protein] + ATP = O-phospho-L-seryl-[protein] + ADP + H(+). It carries out the reaction L-threonyl-[protein] + ATP = O-phospho-L-threonyl-[protein] + ADP + H(+). This Arabidopsis thaliana (Mouse-ear cress) protein is Probable L-type lectin-domain containing receptor kinase I.5 (LECRK15).